A 172-amino-acid polypeptide reads, in one-letter code: Signal peptidase complex catalytic subunit SEC11 (172 aa).

Residues 1–14 are Cytoplasmic-facing; it reads MLSSLQNPRQAAAQ. Residues 15-35 form a helical; Signal-anchor for type II membrane protein membrane-spanning segment; the sequence is LMNFGLILSTAFMMWKGLSVI. Residues 36-172 lie on the Lumenal side of the membrane; that stretch reads TDSPSPIVVV…MGLVVVLQRE (137 aa). Catalysis depends on charge relay system residues Ser-49, His-90, and Asp-115. The tract at residues 158 to 169 is C-terminal short (CTS) helix; the sequence is VMLGIMGLVVVL.

This sequence belongs to the peptidase S26B family. In terms of assembly, component of the signal peptidase complex (SPC) composed of a catalytic subunit SEC11 and three accessory subunits SPC1, SPC2 and SPC3. The complex induces a local thinning of the ER membrane which is used to measure the length of the signal peptide (SP) h-region of protein substrates. This ensures the selectivity of the complex towards h-regions shorter than 18-20 amino acids. SPC associates with the translocon complex.

The protein resides in the endoplasmic reticulum membrane. The catalysed reaction is Cleavage of hydrophobic, N-terminal signal or leader sequences from secreted and periplasmic proteins.. Functionally, catalytic component of the signal peptidase complex (SPC) which catalyzes the cleavage of N-terminal signal sequences from nascent proteins as they are translocated into the lumen of the endoplasmic reticulum. Specifically cleaves N-terminal signal peptides that contain a hydrophobic alpha-helix (h-region) shorter than 18-20 amino acids. This Chaetomium globosum (strain ATCC 6205 / CBS 148.51 / DSM 1962 / NBRC 6347 / NRRL 1970) (Soil fungus) protein is Signal peptidase complex catalytic subunit SEC11 (SEC11).